A 39-amino-acid chain; its full sequence is Cytochrome b6-f complex subunit 5 (39 aa).

The helical transmembrane segment at 5 to 25 threads the bilayer; it reads LLCGIVLGLVPVTLLGLFVSA.

This sequence belongs to the PetG family. In terms of assembly, the 4 large subunits of the cytochrome b6-f complex are cytochrome b6, subunit IV (17 kDa polypeptide, PetD), cytochrome f and the Rieske protein, while the 4 small subunits are PetG, PetL, PetM and PetN. The complex functions as a dimer.

Its subcellular location is the cellular thylakoid membrane. Its function is as follows. Component of the cytochrome b6-f complex, which mediates electron transfer between photosystem II (PSII) and photosystem I (PSI), cyclic electron flow around PSI, and state transitions. PetG is required for either the stability or assembly of the cytochrome b6-f complex. This is Cytochrome b6-f complex subunit 5 from Prochlorococcus marinus (strain NATL1A).